Consider the following 389-residue polypeptide: Flavin-dependent monooxygenase (389 aa).

Residues 12 to 15 (AGVA), 34 to 35 (EK), Gln-44, Arg-105, Tyr-267, and Asp-289 each bind FAD.

Belongs to the aromatic-ring hydroxylase family. FAD serves as cofactor.

The catalysed reaction is a tetracycline + NADPH + O2 + H(+) = a (1S,10aS)-3-(CONH2)-1-(Me2N)-3,3a,4,6-(HO)4-2,5-dioxo-1H,10aH,11H,11aH-cyclopenta[b]anthracene + CO + NADP(+) + H2O. The enzyme catalyses 7-chlorotetracycline + NADPH + O2 + H(+) = (1S,10S,10aS)-3-(CONH2)-9-Cl-1-(Me2N)-3,3a,4,10-(HO)4-10-Me-2,5-dioxo-1H,10aH,11H,11aH-cyclopenta[b]anthracen-6-olate + CO + NADP(+) + H2O. With respect to regulation, inhibited by anhydrotetracycline. In terms of biological role, an FAD-requiring monooxygenase active on tetracycline antibiotic and some of its derivatives, which leads to their inactivation. Expression in E.coli confers high resistance to tetracycline and oxytetracycline, does not confer resistance to minocycline or tigecycline. The reaction requires NADPH. Expression in L.pneumophila confers resistance to tetracycline. Degrades and confers resistance to tetracycline and chlortetracycline. This is Flavin-dependent monooxygenase (tet(56)) from Legionella longbeachae serogroup 1 (strain NSW150).